Here is a 228-residue protein sequence, read N- to C-terminus: UPF0758 protein STER_1430 (228 aa).

The MPN domain occupies 103–225 (QIMSSQQVAR…YYSFREERED (123 aa)). His-174, His-176, and Asp-187 together coordinate Zn(2+). Residues 174–187 (HNHPSGEAYPSRND) carry the JAMM motif motif.

This sequence belongs to the UPF0758 family.

In Streptococcus thermophilus (strain ATCC BAA-491 / LMD-9), this protein is UPF0758 protein STER_1430.